A 681-amino-acid polypeptide reads, in one-letter code: Conserved oligomeric Golgi complex subunit 2 (681 aa).

Belongs to the COG2 family. In terms of assembly, component of the conserved oligomeric Golgi complex which is composed of eight different subunits and is required for normal Golgi morphology and localization.

It localises to the golgi apparatus membrane. In terms of biological role, required for normal Golgi morphology and function. This chain is Conserved oligomeric Golgi complex subunit 2 (cogc-2), found in Caenorhabditis elegans.